Reading from the N-terminus, the 357-residue chain is Iron deficiency-induced protein A (357 aa).

Residues 1–36 (MSESMFSRRDFLLGGTALAGTLLLDSFGDWRRRAEA) constitute a signal peptide (tat-type signal). 5 residues coordinate Fe cation: histidine 48, tyrosine 49, tyrosine 182, tyrosine 238, and tyrosine 239.

The protein belongs to the bacterial solute-binding protein 1 family. Predicted to be exported by the Tat system. The position of the signal peptide cleavage has not been experimentally proven.

It localises to the cellular thylakoid membrane. Its function is as follows. Plays an important role in protecting the acceptor side of photosystem II (PSII) against oxidative damage, especially under iron-limiting growth conditions. Functionally, may also be part of a periplasmic ABC transporter complex involved in iron import. The protein is Iron deficiency-induced protein A (idiA) of Synechococcus elongatus (strain ATCC 33912 / PCC 7942 / FACHB-805) (Anacystis nidulans R2).